The chain runs to 553 residues: MAKLLSFSNESRESLERGMNALADAVRVTIGPRGRNVVLEKSYGSPDIVNDGDTIAKEIELADPFENIGAKLIQQVASKTKDKAGDGTTTATVLAQAMVEEGLRNTAAGASPIELRRGMEKAVAAVVASLNQRSQSVSGDAIRQVATVSSGGDEEVGRMVAEAMDRVSFDGVITVEESKSLATELEVTEGMAFDRGYSSPYFVTDGDRQICEFENALLLLTDRKISSVTDLVPVLETVQKSGSPLVILAEEVDGEALATLVVNKNRGVLQVAAVRAPSFGERRKAALADIAVLTGGQVISEDRAMTLDKVTMEDLGRARRITISKDSTTIVASDDSKEAVSARVASIKRELDNTDSEYDQEKLNERIAKLAGGVAVIKVGAPTETELKNRKLRIEDALNATRAAVEEGIVAGGGSTLLHISAELDALTSGLEGDQKTGVEIVQRALSAPLRQIAENAGSNGDVVVDRVRNSGEGFNALTGNFEDLMNAGILDASKVVRLALQDAVSIASLVVTTEVVVADKPEPPAPAGGGGDPMGGMGGMDPMGGMGGMGMM.

ATP contacts are provided by residues Thr29 to Pro32, Asp86 to Thr90, Gly413, Asn476 to Leu478, and Asp492. Residues Asp520–Pro543 are disordered. Positions Ala528 to Pro543 are enriched in gly residues.

This sequence belongs to the chaperonin (HSP60) family. In terms of assembly, forms a cylinder of 14 subunits composed of two heptameric rings stacked back-to-back. Interacts with the co-chaperonin GroES.

The protein resides in the cytoplasm. The catalysed reaction is ATP + H2O + a folded polypeptide = ADP + phosphate + an unfolded polypeptide.. Functionally, together with its co-chaperonin GroES, plays an essential role in assisting protein folding. The GroEL-GroES system forms a nano-cage that allows encapsulation of the non-native substrate proteins and provides a physical environment optimized to promote and accelerate protein folding. This is Chaperonin GroEL 1 from Synechococcus sp. (strain CC9311).